The sequence spans 271 residues: 3-methyl-2-oxobutanoate hydroxymethyltransferase (271 aa).

Residues D53 and D92 each coordinate Mg(2+). Residues 53 to 54 (DS), D92, and K120 each bind 3-methyl-2-oxobutanoate. E122 is a binding site for Mg(2+). Residue E189 is the Proton acceptor of the active site.

This sequence belongs to the PanB family. As to quaternary structure, homodecamer; pentamer of dimers. It depends on Mg(2+) as a cofactor.

The protein localises to the cytoplasm. The catalysed reaction is 3-methyl-2-oxobutanoate + (6R)-5,10-methylene-5,6,7,8-tetrahydrofolate + H2O = 2-dehydropantoate + (6S)-5,6,7,8-tetrahydrofolate. It functions in the pathway cofactor biosynthesis; (R)-pantothenate biosynthesis; (R)-pantoate from 3-methyl-2-oxobutanoate: step 1/2. Its function is as follows. Catalyzes the reversible reaction in which hydroxymethyl group from 5,10-methylenetetrahydrofolate is transferred onto alpha-ketoisovalerate to form ketopantoate. This Burkholderia vietnamiensis (strain G4 / LMG 22486) (Burkholderia cepacia (strain R1808)) protein is 3-methyl-2-oxobutanoate hydroxymethyltransferase.